The following is a 293-amino-acid chain: Indole-3-glycerol phosphate synthase (293 aa).

It belongs to the TrpC family.

It carries out the reaction 1-(2-carboxyphenylamino)-1-deoxy-D-ribulose 5-phosphate + H(+) = (1S,2R)-1-C-(indol-3-yl)glycerol 3-phosphate + CO2 + H2O. It participates in amino-acid biosynthesis; L-tryptophan biosynthesis; L-tryptophan from chorismate: step 4/5. This chain is Indole-3-glycerol phosphate synthase, found in Prochlorococcus marinus (strain SARG / CCMP1375 / SS120).